Here is an 830-residue protein sequence, read N- to C-terminus: Receptor-like protein kinase HERK 1 (830 aa).

Positions 1–24 are cleaved as a signal peptide; the sequence is MGIEKFETFILISTISILLCICHG. Topologically, residues 25–405 are extracellular; sequence FTPVDNYLIN…SSSSSKSNLG (381 aa). N-linked (GlcNAc...) asparagine glycosylation is found at Asn40, Asn146, Asn217, Asn280, and Asn381. Residues 406–426 form a helical membrane-spanning segment; that stretch reads LIVGSAIGSLLAVVFLGSCFV. At 427-830 the chain is on the cytoplasmic side; that stretch reads LYKKRKRGQD…FSQLVKSEGR (404 aa). The 274-residue stretch at 485–758 folds into the Protein kinase domain; sequence FDESRNIGVG…GDVLWNLEYA (274 aa). Residues 491-499 and Lys513 each bind ATP; that span reads IGVGGFGKV. Catalysis depends on Asp609, which acts as the Proton acceptor.

The protein belongs to the protein kinase superfamily. Ser/Thr protein kinase family. In terms of processing, autophosphorylated. Expressed in most vegetative tissues, including leaves, stems and roots, especially in cell elongation regions.

The protein localises to the cell membrane. In terms of biological role, receptor-like protein kinase required for cell elongation during vegetative growth, mostly in a brassinosteroid-(BR-) independent manner. This Arabidopsis thaliana (Mouse-ear cress) protein is Receptor-like protein kinase HERK 1 (HERK1).